Here is a 63-residue protein sequence, read N- to C-terminus: Large ribosomal subunit protein bL28 (63 aa).

The protein belongs to the bacterial ribosomal protein bL28 family.

This is Large ribosomal subunit protein bL28 from Clostridium botulinum (strain Alaska E43 / Type E3).